Reading from the N-terminus, the 361-residue chain is Phosphoserine aminotransferase (361 aa).

An L-glutamate-binding site is contributed by Arg-43. Residues 77 to 78 (AS), Trp-103, Thr-153, Asp-173, and Gln-196 contribute to the pyridoxal 5'-phosphate site. Lys-197 carries the post-translational modification N6-(pyridoxal phosphate)lysine. 238 to 239 (NT) is a pyridoxal 5'-phosphate binding site.

The protein belongs to the class-V pyridoxal-phosphate-dependent aminotransferase family. SerC subfamily. Homodimer. It depends on pyridoxal 5'-phosphate as a cofactor.

The protein resides in the cytoplasm. The enzyme catalyses O-phospho-L-serine + 2-oxoglutarate = 3-phosphooxypyruvate + L-glutamate. It carries out the reaction 4-(phosphooxy)-L-threonine + 2-oxoglutarate = (R)-3-hydroxy-2-oxo-4-phosphooxybutanoate + L-glutamate. It participates in amino-acid biosynthesis; L-serine biosynthesis; L-serine from 3-phospho-D-glycerate: step 2/3. The protein operates within cofactor biosynthesis; pyridoxine 5'-phosphate biosynthesis; pyridoxine 5'-phosphate from D-erythrose 4-phosphate: step 3/5. Functionally, catalyzes the reversible conversion of 3-phosphohydroxypyruvate to phosphoserine and of 3-hydroxy-2-oxo-4-phosphonooxybutanoate to phosphohydroxythreonine. This chain is Phosphoserine aminotransferase, found in Pseudomonas paraeruginosa (strain DSM 24068 / PA7) (Pseudomonas aeruginosa (strain PA7)).